The primary structure comprises 207 residues: HTH-type transcriptional regulator BetI 2 (207 aa).

An HTH tetR-type domain is found at 8 to 68 (PIRRQQLIKA…ATMRQILTDL (61 aa)). A DNA-binding region (H-T-H motif) is located at residues 31–50 (TVMRIARHAGVSAGIISHYF).

It participates in amine and polyamine biosynthesis; betaine biosynthesis via choline pathway [regulation]. Functionally, repressor involved in the biosynthesis of the osmoprotectant glycine betaine. It represses transcription of the choline transporter BetT and the genes of BetAB involved in the synthesis of glycine betaine. This chain is HTH-type transcriptional regulator BetI 2, found in Chromohalobacter salexigens (strain ATCC BAA-138 / DSM 3043 / CIP 106854 / NCIMB 13768 / 1H11).